Here is a 662-residue protein sequence, read N- to C-terminus: Polyunsaturated fatty acid lipoxygenase ALOX15 (662 aa).

In terms of domain architecture, PLAT spans 2–114 (GLYRIRVSTG…VLSLPEGTGR (113 aa)). Residues 115–662 (TVGEDPQGLF…PSVVENSVAI (548 aa)) form the Lipoxygenase domain. Residues H360, H365, H540, H544, and I662 each coordinate Fe cation.

It belongs to the lipoxygenase family. Interacts with PEBP1; in response to IL13/interleukin-13, prevents the interaction of PEBP1 with RAF1 to activate the ERK signaling cascade. Fe cation is required as a cofactor. Detected in monocytes and eosinophils (at protein level). Expressed in airway epithelial cells.

The protein localises to the cytoplasm. It localises to the cytosol. It is found in the cell membrane. The protein resides in the lipid droplet. It carries out the reaction (5Z,8Z,11Z,14Z)-eicosatetraenoate + O2 = (12S)-hydroperoxy-(5Z,8Z,10E,14Z)-eicosatetraenoate. The enzyme catalyses (5Z,8Z,11Z,14Z)-eicosatetraenoate + O2 = (15S)-hydroperoxy-(5Z,8Z,11Z,13E)-eicosatetraenoate. It catalyses the reaction (9Z,12Z)-octadecadienoate + O2 = (13S)-hydroperoxy-(9Z,11E)-octadecadienoate. The catalysed reaction is (5Z,8Z,11Z,14Z)-eicosatetraenoate + 2 O2 = (14R,15S)-dihydroperoxy-(5Z,8Z,10E,12E)-eicosatetraenoate. It carries out the reaction (5Z,8Z,11Z,14Z)-eicosatetraenoate + 2 O2 = (8S,15S)-dihydroperoxy-(5Z,9E,11Z,13E)-eicosatetraenoate. The enzyme catalyses (14S,15R)-epoxy-(5Z,8Z,11Z)-eicosatrienoate + O2 = (8S)-hydroperoxy-(14S,15R)-epoxy-(5Z,9E,11Z)-eicosatrienoate. It catalyses the reaction (14S,15R)-epoxy-(5Z,8Z,11Z)-eicosatrienoate + O2 = (12S)-hydroperoxy-(14S,15R)-epoxy-(5Z,8Z,10E)-eicosatrienoate. The catalysed reaction is (14R,15S)-epoxy-(5Z,8Z,11Z)-eicosatrienoate + O2 = (5S)-hydroperoxy-(14R,15S)-epoxy-(6E,8Z,11Z)-eicosatrienoate. It carries out the reaction (14R,15S)-epoxy-(5Z,8Z,11Z)-eicosatrienoate + O2 = (12S)-hydroperoxy-(14R,15S)-epoxy-(5Z,8Z,10E)-eicosatrienoate. The enzyme catalyses (15R)-hydroperoxy-(5Z,8Z,11Z,13E)-eicosatetraenoate = 15-oxo-(5Z,8Z,11Z,13E)-eicosatetraenoate + H2O. It catalyses the reaction (15S)-hydroperoxy-(5Z,8Z,11Z,13E)-eicosatetraenoate = (14S,15S)-epoxy-(5Z,8Z,10E,12E)-eicosatetraenoate + H2O. The catalysed reaction is (12S)-hydroperoxy-(5Z,8Z,10E,14Z)-eicosatetraenoate = (8S)-hydroxy-(11S,12S)-epoxy-(5Z,9E,14Z)-eicosatrienoate. It carries out the reaction (4Z,7Z,10Z,13Z,16Z,19Z)-docosahexaenoate + O2 = (14S)-hydroperoxy-(4Z,7Z,10Z,12E,16Z,19Z)-docosahexaenoate. The enzyme catalyses (4Z,7Z,10Z,13Z,16Z,19Z)-docosahexaenoate + O2 = (17S)-hydroperoxy-(4Z,7Z,10Z,13Z,15E,19Z)-docosahexaenoate. It catalyses the reaction (7S)-hydroperoxy-(4Z,8E,10Z,13Z,16Z,19Z)-docosahexaenoate + O2 = (7S,14S)-dihydroperoxy-(4Z,8E,10Z,12E,16Z,19Z)-docosahexaenoate. The catalysed reaction is (7S)-hydroperoxy-(4Z,8E,10Z,13Z,16Z,19Z)-docosahexaenoate + O2 = (7S,17S)-dihydroperoxy-(4Z,8E,10Z,13Z,15E,19Z)-docosahexaenoate. It carries out the reaction (4Z,7Z,10Z,13Z,16Z,19Z)-docosahexaenoate + O2 = (11S)-hydroperoxy-(4Z,7Z,9E,13Z,16Z,19Z)-docosahexaenoate. The enzyme catalyses (7Z,10Z,13Z,16Z,19Z)-docosapentaenoate + O2 = 14-hydroperoxy-(7Z,10Z,12E,16Z,19Z)-docosapentaenoate. It catalyses the reaction (4Z,7Z,10Z,13Z,16Z)-docosapentaenoate + O2 = 14-hydroperoxy-(4Z,7Z,10Z,12E,16Z)-docosapentaenoate. The catalysed reaction is N-(5Z,8Z,11Z,14Z)-eicosatetraenoyl-taurine + O2 = N-(12S)-hydroperoxy-(5Z,8Z,10E,14Z)-eicosatetraenoyl-taurine. It carries out the reaction N-(5Z,8Z,11Z,14Z)-eicosatetraenoyl-gamma-aminobutanoate + O2 = N-(12S)-hydroperoxy-(5Z,8Z,10E,14Z)-eicosatetraenoyl-gamma-aminobutanoate. The enzyme catalyses N-(5Z,8Z,11Z,14Z)-eicosatetraenoyl-glycine + O2 = N-(12S)-hydroperoxy-(5Z,8Z,10E,14Z)-eicosatetraenoyl-glycine. It catalyses the reaction N-(5Z,8Z,11Z,14Z)-eicosatetraenoyl-L-alanine + O2 = N-(12S)-hydroperoxy-(5Z,8Z,10E,14Z)-eicosatetraenoyl-alanine. The catalysed reaction is N-(5Z,8Z,11Z,14Z)-eicosatetraenoyl-taurine + O2 = N-(15S)-hydroperoxy-(5Z,8Z,11Z,13E)-eicosatetraenoyl-taurine. It carries out the reaction N-(5Z,8Z,11Z,14Z)-eicosatetraenoyl-gamma-aminobutanoate + O2 = N-(15S)-hydroperoxy-(5Z,8Z,11Z,13E)-eicosatetraenoyl-gamma-aminobutanoate. The enzyme catalyses N-(5Z,8Z,11Z,14Z)-eicosatetraenoyl-glycine + O2 = N-(15S)-hydroperoxy-(5Z,8Z,11Z,13E)-eicosatetraenoyl-glycine. It catalyses the reaction N-(5Z,8Z,11Z,14Z)-eicosatetraenoyl-L-alanine + O2 = N-(15S)-hydroperoxy-(5Z,8Z,11Z,13E)-eicosatetraenoyl-alanine. The protein operates within lipid metabolism; hydroperoxy eicosatetraenoic acid biosynthesis. With respect to regulation, activity is increased by binding phosphatidylinositol phosphates, especially phosphatidylinositol 3,4-bisphosphate and phosphatidylinositol 4,5-bisphosphate. Inactivated at 37 degrees Celsius by (13S)-hydroperoxy-(9Z,11E)-octadecadienoate. Non-heme iron-containing dioxygenase that catalyzes the stereo-specific peroxidation of free and esterified polyunsaturated fatty acids generating a spectrum of bioactive lipid mediators. It inserts peroxyl groups at C12 or C15 of arachidonate ((5Z,8Z,11Z,14Z)-eicosatetraenoate) producing both 12-hydroperoxyeicosatetraenoate/12-HPETE and 15-hydroperoxyeicosatetraenoate/15-HPETE. It may then act on 12-HPETE to produce hepoxilins, which may show pro-inflammatory properties. Can also peroxidize linoleate ((9Z,12Z)-octadecadienoate) to 13-hydroperoxyoctadecadienoate/13-HPODE. May participate in the sequential oxidations of DHA ((4Z,7Z,10Z,13Z,16Z,19Z)-docosahexaenoate) to generate specialized pro-resolving mediators (SPMs)like resolvin D5 ((7S,17S)-diHPDHA) and (7S,14S)-diHPDHA, that actively down-regulate the immune response and have anti-aggregation properties with platelets. Can convert epoxy fatty acids to hydroperoxy-epoxides derivatives followed by an intramolecular nucleophilic substitution leading to the formation of monocyclic endoperoxides. Plays an important role during the maintenance of self-tolerance by peroxidizing membrane-bound phosphatidylethanolamine which can then signal the sorting process for clearance of apoptotic cells during inflammation and prevent an autoimmune response. In addition to its role in the immune and inflammatory responses, this enzyme may play a role in epithelial wound healing in the cornea through production of lipoxin A4 (LXA(4)) and docosahexaenoic acid-derived neuroprotectin D1 (NPD1; 10R,17S-HDHA), both lipid autacoids exhibit anti-inflammatory and neuroprotective properties. Furthermore, it may regulate actin polymerization which is crucial for several biological processes such as the phagocytosis of apoptotic cells. It is also implicated in the generation of endogenous ligands for peroxisome proliferator activated receptor (PPAR-gamma), hence modulating macrophage development and function. It may also exert a negative effect on skeletal development by regulating bone mass through this pathway. As well as participates in ER stress and downstream inflammation in adipocytes, pancreatic islets, and liver. Finally, it is also involved in the cellular response to IL13/interleukin-13. In Homo sapiens (Human), this protein is Polyunsaturated fatty acid lipoxygenase ALOX15.